We begin with the raw amino-acid sequence, 295 residues long: Tissue factor (295 aa).

An N-terminal signal peptide occupies residues 1–28 (MAIPMRPRLLAALAPTFLGFLLLQVAVG). The Extracellular segment spans residues 29–252 (AGTPPGKAFN…TEQWKSVLGE (224 aa)). 2 N-linked (GlcNAc...) asparagine glycosylation sites follow: Asn38 and Asn58. A disulfide bridge links Cys76 with Cys84. N-linked (GlcNAc...) asparagine glycans are attached at residues Asn95, Asn109, Asn170, and Asn201. Residues Cys219 and Cys242 are joined by a disulfide bond. The WKS motif signature appears at 246–248 (WKS). The chain crosses the membrane as a helical span at residues 253–275 (TLIIVGAVVFLVTVFIILLTISL). Cys276 carries S-palmitoyl cysteine lipidation. The Cytoplasmic segment spans residues 276 to 295 (CKRRKNRAGQKRKNTPSRLA).

Belongs to the tissue factor family. Interacts with HSPE; the interaction, inhibited by heparin, promotes the generation of activated factor X and activates coagulation in the presence of activated factor VII.

It localises to the membrane. Functionally, initiates blood coagulation by forming a complex with circulating factor VII or VIIa. The [TF:VIIa] complex activates factors IX or X by specific limited proteolysis. TF plays a role in normal hemostasis by initiating the cell-surface assembly and propagation of the coagulation protease cascade. In Rattus norvegicus (Rat), this protein is Tissue factor (F3).